We begin with the raw amino-acid sequence, 264 residues long: MIYRIISHIPKIFFKPAYDLYERYLIEKVKSGVLPKHVAIIMDGNRRWARKHEKPPWYGHLFGSKKLEEILEWCHELGIRILTVYAFSTENFKRSKEEVDRLMKLFEEKFRELVTDKRVHEYGVRVNVIGRKELLPKSVRDAVEEAERATRKYNNYILNVALAYGGRSEIVDAVKDIARDVISGKLRIEEIDEELLRRYLYVPNMPDPDIVIRTGGEVRISNFLLYQIAYSELFFVDVYFPEFRKIDFLRIIREFQKRERRFGR.

Asp43 is a catalytic residue. Asp43 lines the Mg(2+) pocket. Substrate is bound by residues 44-47 (GNRR), Trp48, His60, and 88-90 (STE). Residue Asn91 is the Proton acceptor of the active site. Substrate contacts are provided by residues Phe92, Arg94, Arg213, and 219–221 (RIS). Glu232 lines the Mg(2+) pocket.

The protein belongs to the UPP synthase family. As to quaternary structure, homodimer. Mg(2+) serves as cofactor.

The enzyme catalyses geranylgeranyl diphosphate + 7 isopentenyl diphosphate = tri-trans,hepta-cis-undecaprenyl diphosphate + 7 diphosphate. In terms of biological role, catalyzes the sequential condensation of isopentenyl diphosphate (IPP) with geranylgeranyl diphosphate (GGPP) to yield (2Z,6Z,10Z,14Z,18Z,22Z,26Z,30E,34E,38E)-undecaprenyl diphosphate (tritrans,heptacis-UPP). It is probably the precursor of glycosyl carrier lipids. This chain is Tritrans,polycis-undecaprenyl-diphosphate synthase (geranylgeranyl-diphosphate specific), found in Pyrococcus horikoshii (strain ATCC 700860 / DSM 12428 / JCM 9974 / NBRC 100139 / OT-3).